Reading from the N-terminus, the 165-residue chain is Protein E6 (165 aa).

2 zinc fingers span residues 52–88 and 125–161; these read CNFC…CRVC and CYTC…CRLC.

This sequence belongs to the papillomaviridae E6 protein family. In terms of assembly, forms homodimers. Interacts with ubiquitin-protein ligase UBE3A/E6-AP; this interaction stimulates UBE3A ubiquitin activity. Interacts with host BAK1.

It localises to the host cytoplasm. The protein localises to the host nucleus. In terms of biological role, plays a major role in the induction and maintenance of cellular transformation. E6 associates with host UBE3A/E6-AP ubiquitin-protein ligase and modulates its activity. Protects host keratinocytes from apoptosis by mediating the degradation of host BAK1. May also inhibit host immune response. The chain is Protein E6 from Homo sapiens (Human).